We begin with the raw amino-acid sequence, 597 residues long: uncharacterized protein (597 aa).

2 disordered regions span residues 165–197 (NSRA…IFSK) and 278–344 (ERSS…RGTL). The segment covering 169–178 (VPPPAPPNPP) has biased composition (pro residues). A compositionally biased stretch (basic and acidic residues) spans 179 to 189 (KMEKHMSHDTS). Over residues 293-313 (STEVSITSSSPSPSSSSSTST) the composition is skewed to low complexity. Residues 402–465 (WSLDDVLLWL…LDDLSKIIEN (64 aa)) enclose the SAM domain. The interval 576–597 (EESQQKESSSSGISSSPQTPTE) is disordered. Residues 581 to 597 (KESSSSGISSSPQTPTE) are compositionally biased toward low complexity.

This is an uncharacterized protein from Caenorhabditis elegans.